The primary structure comprises 373 residues: Glutamine synthetase (373 aa).

Thr2 is modified (N-acetylthreonine). Positions 2–25 (TTSASSHLNKGIKQVYMSLPQGEK) are required for glutamine-induced ubiquitination by CRL4(CRBN) and proteasomal degradation. An N6-acetyllysine; by EP300 mark is found at Lys11 and Lys14. A GS beta-grasp domain is found at 24 to 106 (EKVQAMYIWI…VLCEVFKYNR (83 aa)). Tyr104 bears the Phosphotyrosine mark. The GS catalytic domain occupies 113–373 (LRHTCKRIMD…TGDEPFQYKN (261 aa)). Residue Glu134 participates in ATP binding. Mn(2+)-binding residues include Glu134, Glu136, Glu196, and Glu203. Residue 203–208 (EFQIGP) coordinates ATP. L-glutamate is bound at residue 246-247 (NW). Mn(2+) is bound at residue His253. ATP contacts are provided by residues 255–257 (NFS), Arg319, and Arg324. Residue Arg319 participates in L-glutamate binding. 336–338 (YFE) is a binding site for ADP. Glu338 is a Mn(2+) binding site. Arg340 provides a ligand contact to L-glutamate. Residue Ser343 is modified to Phosphoserine.

The protein belongs to the glutamine synthetase family. As to quaternary structure, decamer; composed of two pentamers. Interacts with PALMD. Interacts with RHOJ. Interacts with BEST2; this interaction tethers a fraction of GLUL to the membrane, causing a decrease of cytosolic glutamine synthase (GS) activity and inhibits the chloride channel activity of BEST2 by affecting the gating at the aperture in the absence of intracellular glutamate. It depends on Mg(2+) as a cofactor. The cofactor is Mn(2+). Acetylated by EP300/p300; acetylation is stimulated by increased glutamine levels and promotes ubiquitin-mediated proteasomal degradation. In terms of processing, palmitoylated; undergoes autopalmitoylation. Post-translationally, ubiquitinated by ZNRF1. Ubiquitinated by the DCX (DDB1-CUL4-X-box) E3 ubiquitin-protein ligase complex called CRL4(CRBN), leading to proteasomal degradation. As to expression, expressed in endothelial cells.

The protein resides in the cytoplasm. It is found in the cytosol. It localises to the microsome. The protein localises to the mitochondrion. Its subcellular location is the cell membrane. It carries out the reaction L-glutamate + NH4(+) + ATP = L-glutamine + ADP + phosphate + H(+). The catalysed reaction is L-cysteinyl-[protein] + hexadecanoyl-CoA = S-hexadecanoyl-L-cysteinyl-[protein] + CoA. Its activity is regulated as follows. Glutamine synthetase activity is inhibited by methionine sulfoximine (MSO). Glutamine synthetase that catalyzes the ATP-dependent conversion of glutamate and ammonia to glutamine. Its role depends on tissue localization: in the brain, it regulates the levels of toxic ammonia and converts neurotoxic glutamate to harmless glutamine, whereas in the liver, it is one of the enzymes responsible for the removal of ammonia. Plays a key role in ammonium detoxification during erythropoiesis: the glutamine synthetase activity is required to remove ammonium generated by porphobilinogen deaminase (HMBS) during heme biosynthesis to prevent ammonium accumulation and oxidative stress. Essential for proliferation of fetal skin fibroblasts. Independently of its glutamine synthetase activity, required for endothelial cell migration during vascular development: acts by regulating membrane localization and activation of the GTPase RHOJ, possibly by promoting RHOJ palmitoylation. May act as a palmitoyltransferase for RHOJ: able to autopalmitoylate and then transfer the palmitoyl group to RHOJ. Plays a role in ribosomal 40S subunit biogenesis. Through the interaction with BEST2, inhibits BEST2 channel activity by affecting the gating at the aperture in the absence of intracellular L-glutamate, but sensitizes BEST2 to intracellular L-glutamate, which promotes the opening of BEST2 and thus relieves its inhibitory effect on BEST2. The polypeptide is Glutamine synthetase (Homo sapiens (Human)).